The primary structure comprises 458 residues: tRNA modification GTPase MnmE (458 aa).

Positions 23, 87, and 126 each coordinate (6S)-5-formyl-5,6,7,8-tetrahydrofolate. The 157-residue stretch at glycine 224 to phenylalanine 380 folds into the TrmE-type G domain. Asparagine 234 lines the K(+) pocket. GTP contacts are provided by residues asparagine 234–serine 239, threonine 253–threonine 259, and aspartate 278–glycine 281. Serine 238 serves as a coordination point for Mg(2+). Positions 253, 255, and 258 each coordinate K(+). Threonine 259 lines the Mg(2+) pocket. Lysine 458 serves as a coordination point for (6S)-5-formyl-5,6,7,8-tetrahydrofolate.

This sequence belongs to the TRAFAC class TrmE-Era-EngA-EngB-Septin-like GTPase superfamily. TrmE GTPase family. Homodimer. Heterotetramer of two MnmE and two MnmG subunits. It depends on K(+) as a cofactor.

It localises to the cytoplasm. Its function is as follows. Exhibits a very high intrinsic GTPase hydrolysis rate. Involved in the addition of a carboxymethylaminomethyl (cmnm) group at the wobble position (U34) of certain tRNAs, forming tRNA-cmnm(5)s(2)U34. This is tRNA modification GTPase MnmE from Clostridium perfringens (strain ATCC 13124 / DSM 756 / JCM 1290 / NCIMB 6125 / NCTC 8237 / Type A).